Here is a 251-residue protein sequence, read N- to C-terminus: MAVHLLIVDALNLIRRIHAVQGSPCAETCLHALEQLIVHSQPTHAVAVFDDDARNSGWRHQRLPDYKAGRPPMPDELHNEMPAIRAAFEQRGVQCWVSSGNEADDLAATLAVKVTQAGHQATIVSTDKGYCQLLSPTLRIRDYFQKRWLDAPFIEKEFGVLPQQLPDYWGLAGISSSKVPGVAGIGPKSATQLLVQFQTLEGIYAHLDEVAEKWCKKLEAHKEMAFLCRDIARLQTDLHIDGNLQQLRLTR.

Asp104 lines the Mg(2+) pocket. A 5'-3' exonuclease domain is found at 160-249 (VLPQQLPDYW…IDGNLQQLRL (90 aa)). Residues Leu171, Ala172, Pro180, Val182, and Ile185 each coordinate K(+). An interaction with DNA region spans residues 184–189 (GIGPKS).

It belongs to the Xni family. Mg(2+) serves as cofactor. The cofactor is K(+).

Its function is as follows. Has flap endonuclease activity. During DNA replication, flap endonucleases cleave the 5'-overhanging flap structure that is generated by displacement synthesis when DNA polymerase encounters the 5'-end of a downstream Okazaki fragment. This chain is Flap endonuclease Xni, found in Citrobacter koseri (strain ATCC BAA-895 / CDC 4225-83 / SGSC4696).